We begin with the raw amino-acid sequence, 255 residues long: NAD kinase (255 aa).

The Proton acceptor role is filled by Asp-44. NAD(+)-binding positions include Asp-44–Gly-45, His-49, Asn-114–Glu-115, Asp-144, Ala-152, Ser-155–Ser-160, and Gln-216.

Belongs to the NAD kinase family. The cofactor is a divalent metal cation.

The protein resides in the cytoplasm. It carries out the reaction NAD(+) + ATP = ADP + NADP(+) + H(+). In terms of biological role, involved in the regulation of the intracellular balance of NAD and NADP, and is a key enzyme in the biosynthesis of NADP. Catalyzes specifically the phosphorylation on 2'-hydroxyl of the adenosine moiety of NAD to yield NADP. The chain is NAD kinase from Rickettsia peacockii (strain Rustic).